Reading from the N-terminus, the 2641-residue chain is CCR4-NOT transcription complex subunit let-711 (2641 aa).

The LXXLL motif lies at 660–664; it reads LSELL. 5 disordered regions span residues 771 to 887, 936 to 963, 1197 to 1221, 1518 to 1565, and 2034 to 2054; these read SGRS…QNAQ, TQRQ…PQQQ, EGGR…PAAA, QSKI…SQGA, and GMNN…AGLQ. Low complexity-rich tracts occupy residues 774–795, 802–839, and 853–877; these read SSSV…QQQQ, LPPS…SQQQ, and PAQF…HMMG. Residues 951-960 are compositionally biased toward pro residues; sequence PQRPSGPPTP. Low complexity predominate over residues 1205–1221; that stretch reads GSAQAGSASSTPTPAAA. A compositionally biased stretch (low complexity) spans 2034-2046; it reads GMNNAMNNGAGNA. An LXXLL motif is present at residues 2341–2345; sequence LRVLL. Residues 2609–2641 are disordered; the sequence is AQGSQPQAQPDGAPGPLGNNTGAANQQQNPNTN.

The protein belongs to the CNOT1 family. Component of the CCR4-NOT complex at least composed of ccf-1, ccr-4 and let-711, which is required for germ cell development in hermaphrodites. Within the complex interacts with ccf-1 and ccr-4; the interactions are direct. In terms of tissue distribution, highly expressed in the germline of hermaphrodites.

The protein localises to the nucleus. In terms of biological role, scaffolding component of the CCR4-NOT complex which is one of the major cellular mRNA deadenylases and is linked to various cellular processes including bulk mRNA degradation, miRNA-mediated repression, translational repression during translational initiation and general transcription regulation. Positively regulates the accumulation of the CCR4-NOT complex component ccr-1. Within the complex promotes germ cell development and fertility in hermaphrodites. Additional complex functions may be a consequence of its influence on mRNA expression. Its scaffolding function implies its interaction with the catalytic complex module and diverse RNA-binding proteins mediating the complex recruitment to selected mRNA 3'UTRs. Mediates the recruitment of the CCR4-NOT complex to miRNA targets and to the RISC complex. Acts as a transcriptional repressor. Represses the ligand-dependent transcriptional activation by nuclear receptors. In embryos, plays a role in female pronucleus and mitotic spindle positioning during the first cleavage divisions after fertilization. This may partly be through negatively regulating the accumulation of zyg-9 at the centrosome. Negatively regulates the formation of long astral microtubules in developing embryos. Required for the stabilization and degradation of maternal mRNAs such as nos-2 in somatic blastomeres. The chain is CCR4-NOT transcription complex subunit let-711 from Caenorhabditis elegans.